Consider the following 224-residue polypeptide: Adenylate kinase (224 aa).

10 to 15 (GSGKGT) provides a ligand contact to ATP. The tract at residues 30–59 (ESGAIFRDNIKGGTDLGMKAKAYIDKGDLV) is NMP. Residues serine 31, arginine 36, 57 to 59 (DLV), 85 to 88 (GFPR), and glutamine 92 contribute to the AMP site. The segment at 126-165 (GRRLCENDNNHPNNIFIDAIKPNGDKCRVCGGALSSRADD) is LID. An ATP-binding site is contributed by arginine 127. Positions 162 and 174 each coordinate AMP. Asparagine 211 is an ATP binding site.

Belongs to the adenylate kinase family. As to quaternary structure, monomer.

The protein resides in the cytoplasm. It carries out the reaction AMP + ATP = 2 ADP. Its pathway is purine metabolism; AMP biosynthesis via salvage pathway; AMP from ADP: step 1/1. Functionally, catalyzes the reversible transfer of the terminal phosphate group between ATP and AMP. Plays an important role in cellular energy homeostasis and in adenine nucleotide metabolism. The polypeptide is Adenylate kinase (Desulforapulum autotrophicum (strain ATCC 43914 / DSM 3382 / VKM B-1955 / HRM2) (Desulfobacterium autotrophicum)).